We begin with the raw amino-acid sequence, 1111 residues long: Protein NETWORKED 1C (1111 aa).

Positions 13–93 (YSWWWDSHNT…ERYNHATGVI (81 aa)) constitute an NAB domain. 3 coiled-coil regions span residues 202-287 (SESE…KESS), 314-605 (ERAS…LISE), and 642-752 (KTIG…LESK). Residues 850-870 (TGGGRSMRKQDGGSGRMRKQS) form a disordered region. The stretch at 943 to 1009 (NREVNKRRVL…EGEEAIEKLF (67 aa)) forms a coiled coil.

Belongs to the NET family.

Functionally, plant-specific actin binding protein. May be part of a membrane-cytoskeletal adapter complex. The protein is Protein NETWORKED 1C of Arabidopsis thaliana (Mouse-ear cress).